Reading from the N-terminus, the 435-residue chain is MLKEQPKGTVTVLLGAQWGDEGKGKIVDYLIAKDKVQVVARCQGGNNAGHTVVANGRKYDFHIIPSGIIAEKCFNIIGNGTVVNLDSFFEELDHNKITNIPGWEKRILISDRAHLICDIHMLVDGHSEDRLNINKIGTTKKGIGPTYSSKCFRNGLRVGDLVYDFDGFTLKFRELVKYYQKQYPDLEIDVDLELIKFKKHANKLNELALVADTVITLDELRSSGKTVLVEGANGTMLDIDFGTYPFVTSSNATVGGAITGLGLPPMSIKRVIGVTKAYSTRVGSGPFPTELKNDIGDKLQRIGHEVGVTTGRKRRCGWIDLVLLKRAHLINGFTDIALTKLDVLDTFDVIKAGVAYRLDKELLKSPPSQASDWEKVEVEYRTFKGWNTPILAMRSFNELPENCRIFIEFIEQYVGVPVKWIGVGEEREALILREP.

GTP is bound by residues 19 to 25 and 49 to 51; these read GDEGKGK and GHT. Asp20 functions as the Proton acceptor in the catalytic mechanism. Mg(2+) is bound by residues Asp20 and Gly49. Residues 20–23, 47–50, Thr139, Arg153, Asn233, Thr248, and Arg312 contribute to the IMP site; these read DEGK and NAGH. The Proton donor role is filled by His50. 308-314 provides a ligand contact to substrate; the sequence is VTTGRKR. Residues Arg314, 340 to 342, and 422 to 424 each bind GTP; these read KLD and GVG.

Belongs to the adenylosuccinate synthetase family. As to quaternary structure, homodimer. Requires Mg(2+) as cofactor.

Its subcellular location is the cytoplasm. It catalyses the reaction IMP + L-aspartate + GTP = N(6)-(1,2-dicarboxyethyl)-AMP + GDP + phosphate + 2 H(+). It participates in purine metabolism; AMP biosynthesis via de novo pathway; AMP from IMP: step 1/2. Plays an important role in the de novo pathway and in the salvage pathway of purine nucleotide biosynthesis. Catalyzes the first committed step in the biosynthesis of AMP from IMP. The chain is Adenylosuccinate synthetase from Brugia malayi (Filarial nematode worm).